The primary structure comprises 905 residues: Protein translocase subunit SecA (905 aa).

Residues Q87, 105 to 109 (GEGKT), and D512 each bind ATP. The tract at residues 565 to 584 (RRIDNQLRGRSGRQGDPGSS) is disordered. The Zn(2+) site is built by C886, C888, C897, and H898.

This sequence belongs to the SecA family. As to quaternary structure, monomer and homodimer. Part of the essential Sec protein translocation apparatus which comprises SecA, SecYEG and auxiliary proteins SecDF-YajC and YidC. It depends on Zn(2+) as a cofactor.

The protein resides in the cell inner membrane. Its subcellular location is the cytoplasm. The enzyme catalyses ATP + H2O + cellular proteinSide 1 = ADP + phosphate + cellular proteinSide 2.. Its function is as follows. Part of the Sec protein translocase complex. Interacts with the SecYEG preprotein conducting channel. Has a central role in coupling the hydrolysis of ATP to the transfer of proteins into and across the cell membrane, serving both as a receptor for the preprotein-SecB complex and as an ATP-driven molecular motor driving the stepwise translocation of polypeptide chains across the membrane. The protein is Protein translocase subunit SecA of Haemophilus ducreyi (strain 35000HP / ATCC 700724).